The chain runs to 136 residues: Globin-2 (136 aa).

Residues 1-134 (VSQADIAAVQ…ILSQMKIALS (134 aa)) form the Globin domain. A heme b-binding site is contributed by histidine 89.

Belongs to the globin family. Homodimer.

This chain is Globin-2, found in Phreagena soyoae (Deep-sea cold-seep clam).